Consider the following 40-residue polypeptide: Photosystem II reaction center protein J (40 aa).

Residues 8–28 form a helical membrane-spanning segment; that stretch reads IPLWLIGTVTGIPVIGLVGVF.

This sequence belongs to the PsbJ family. As to quaternary structure, PSII is composed of 1 copy each of membrane proteins PsbA, PsbB, PsbC, PsbD, PsbE, PsbF, PsbH, PsbI, PsbJ, PsbK, PsbL, PsbM, PsbT, PsbX, PsbY, PsbZ, Psb30/Ycf12, at least 3 peripheral proteins of the oxygen-evolving complex and a large number of cofactors. It forms dimeric complexes.

The protein localises to the plastid. It is found in the chloroplast thylakoid membrane. Its function is as follows. One of the components of the core complex of photosystem II (PSII). PSII is a light-driven water:plastoquinone oxidoreductase that uses light energy to abstract electrons from H(2)O, generating O(2) and a proton gradient subsequently used for ATP formation. It consists of a core antenna complex that captures photons, and an electron transfer chain that converts photonic excitation into a charge separation. This chain is Photosystem II reaction center protein J, found in Lolium perenne (Perennial ryegrass).